Here is a 553-residue protein sequence, read N- to C-terminus: Serine protease 53 (553 aa).

Residues Met-1–Ala-23 form the signal peptide. Peptidase S1 domains lie at Ala-24–Gln-273 and Val-294–Trp-526. A disordered region spans residues Ala-27–Gly-46. Residues Cys-62 and Cys-78 are joined by a disulfide bond. Residues His-77 and Asp-128 each act as charge relay system in the active site. Intrachain disulfides connect Cys-158-Cys-230, Cys-187-Cys-209, Cys-220-Cys-249, and Cys-326-Cys-342. Residues Ser-224, His-341, and Asp-382 each act as charge relay system in the active site. 2 cysteine pairs are disulfide-bonded: Cys-444/Cys-464 and Cys-474/Cys-502. The active-site Charge relay system is the Ser-478.

This sequence belongs to the peptidase S1 family. As to expression, predominantly detected in testis, liver, heart and ovary, as well as in several tumor cell lines.

Its subcellular location is the secreted. In terms of biological role, in vitro can degrade the fibrinogen alpha chain of as well as pro-urokinase-type plasminogen activator. This Homo sapiens (Human) protein is Serine protease 53 (PRSS53).